Reading from the N-terminus, the 203-residue chain is MKVTALGNTLTGFGQALATTLGVDTTSSSPNCAEMMVVFARGTSEPGNVGLFSGPTFFDALEVMMGAGAVSVQGVEYGASIEGFLQGGDPAGSAAMAGIVEGTVQNCPNAKIVMSGYSQGGQLVHNAAAMLPAATMAKISSLVIFGDPNDGKPIANADPSKVMVVCHPGHNICDGRDLVLVEHLTYSRDAVEAATFAAARAKA.

The first 18 residues, 1–18, serve as a signal peptide directing secretion; the sequence is MKVTALGNTLTGFGQALA. A disulfide bridge links Cys32 with Cys107. Ser118 serves as the catalytic Nucleophile. A disulfide bond links Cys166 and Cys173. His170 is an active-site residue. His183 (proton donor/acceptor) is an active-site residue.

It belongs to the cutinase family. Post-translationally, the 2 disulfide bonds play a critical role in holding the catalytic residues in juxta-position; reduction of the disulfide bridges results in the complete inactivation of the enzyme.

It localises to the secreted. The enzyme catalyses cutin + H2O = cutin monomers.. Functionally, catalyzes the hydrolysis of complex carboxylic polyesters found in the cell wall of plants. Degrades cutin, a macromolecule that forms the structure of the plant cuticle. Allows pathogenic fungi to penetrate through the cuticular barrier into the host plant during the initial stage of fungal infection. The polypeptide is Cutinase pbc1 (Pyrenopeziza brassicae).